Consider the following 65-residue polypeptide: Sodium channel alpha-toxin Acra4 (65 aa).

Positions 2–63 (RDGYIVDDKN…PIKDPSYKCH (62 aa)) constitute an LCN-type CS-alpha/beta domain. 4 cysteine pairs are disulfide-bonded: Cys-12–Cys-62, Cys-16–Cys-34, Cys-20–Cys-44, and Cys-24–Cys-46. Position 65 (Arg-65) is a propeptide, removed by a carboxypeptidase.

This sequence belongs to the long (4 C-C) scorpion toxin superfamily. Sodium channel inhibitor family. Alpha subfamily. As to expression, expressed by the venom gland.

It is found in the secreted. Functionally, alpha toxins bind voltage-independently at site-3 of sodium channels (Nav) and inhibit the inactivation of the activated channels, thereby blocking neuronal transmission. Electrophysiological studies of this were performed using sodium-channels expressed in F11 cell culture, by patch-clamp recordings. Affinity of this toxin toward sodium channels in F11 cell line is in the order of 1 uM concentration. The polypeptide is Sodium channel alpha-toxin Acra4 (Androctonus crassicauda (Arabian fat-tailed scorpion)).